The sequence spans 240 residues: Aspartate/glutamate leucyltransferase (240 aa).

This sequence belongs to the R-transferase family. Bpt subfamily.

It localises to the cytoplasm. It catalyses the reaction N-terminal L-glutamyl-[protein] + L-leucyl-tRNA(Leu) = N-terminal L-leucyl-L-glutamyl-[protein] + tRNA(Leu) + H(+). The catalysed reaction is N-terminal L-aspartyl-[protein] + L-leucyl-tRNA(Leu) = N-terminal L-leucyl-L-aspartyl-[protein] + tRNA(Leu) + H(+). Functionally, functions in the N-end rule pathway of protein degradation where it conjugates Leu from its aminoacyl-tRNA to the N-termini of proteins containing an N-terminal aspartate or glutamate. The sequence is that of Aspartate/glutamate leucyltransferase from Bordetella avium (strain 197N).